A 294-amino-acid chain; its full sequence is Phosphatidylserine decarboxylase proenzyme (294 aa).

Residues aspartate 100, histidine 157, and serine 261 each act as charge relay system; for autoendoproteolytic cleavage activity in the active site. The active-site Schiff-base intermediate with substrate; via pyruvic acid; for decarboxylase activity is the serine 261. Serine 261 bears the Pyruvic acid (Ser); by autocatalysis mark.

Belongs to the phosphatidylserine decarboxylase family. PSD-B subfamily. Prokaryotic type I sub-subfamily. In terms of assembly, heterodimer of a large membrane-associated beta subunit and a small pyruvoyl-containing alpha subunit. It depends on pyruvate as a cofactor. In terms of processing, is synthesized initially as an inactive proenzyme. Formation of the active enzyme involves a self-maturation process in which the active site pyruvoyl group is generated from an internal serine residue via an autocatalytic post-translational modification. Two non-identical subunits are generated from the proenzyme in this reaction, and the pyruvate is formed at the N-terminus of the alpha chain, which is derived from the carboxyl end of the proenzyme. The autoendoproteolytic cleavage occurs by a canonical serine protease mechanism, in which the side chain hydroxyl group of the serine supplies its oxygen atom to form the C-terminus of the beta chain, while the remainder of the serine residue undergoes an oxidative deamination to produce ammonia and the pyruvoyl prosthetic group on the alpha chain. During this reaction, the Ser that is part of the protease active site of the proenzyme becomes the pyruvoyl prosthetic group, which constitutes an essential element of the active site of the mature decarboxylase.

The protein localises to the cell membrane. The catalysed reaction is a 1,2-diacyl-sn-glycero-3-phospho-L-serine + H(+) = a 1,2-diacyl-sn-glycero-3-phosphoethanolamine + CO2. It participates in phospholipid metabolism; phosphatidylethanolamine biosynthesis; phosphatidylethanolamine from CDP-diacylglycerol: step 2/2. Catalyzes the formation of phosphatidylethanolamine (PtdEtn) from phosphatidylserine (PtdSer). This chain is Phosphatidylserine decarboxylase proenzyme, found in Histophilus somni (strain 129Pt) (Haemophilus somnus).